A 279-amino-acid chain; its full sequence is Diaminopimelate epimerase (279 aa).

Substrate contacts are provided by Asn-14 and Gln-68. Cys-77 functions as the Proton donor in the catalytic mechanism. Substrate is bound by residues 78-79 (GN), Asn-191, and 207-208 (ER). Catalysis depends on Cys-217, which acts as the Proton acceptor. 218-219 (GT) lines the substrate pocket.

The protein belongs to the diaminopimelate epimerase family. In terms of assembly, homodimer.

Its subcellular location is the cytoplasm. The catalysed reaction is (2S,6S)-2,6-diaminopimelate = meso-2,6-diaminopimelate. It functions in the pathway amino-acid biosynthesis; L-lysine biosynthesis via DAP pathway; DL-2,6-diaminopimelate from LL-2,6-diaminopimelate: step 1/1. Catalyzes the stereoinversion of LL-2,6-diaminopimelate (L,L-DAP) to meso-diaminopimelate (meso-DAP), a precursor of L-lysine. The sequence is that of Diaminopimelate epimerase from Methanothrix thermoacetophila (strain DSM 6194 / JCM 14653 / NBRC 101360 / PT) (Methanosaeta thermophila).